Consider the following 984-residue polypeptide: Ephrin type-A receptor 3 (984 aa).

The N-terminal stretch at 1 to 20 (MDCHLSILILFGCCVLSCSR) is a signal peptide. Residues 21 to 541 (ELSPQPSNEV…SFSISGENSH (521 aa)) are Extracellular-facing. Residues 29 to 207 (EVNLLDSKTI…YFKKCPFTVK (179 aa)) enclose the Eph LBD domain. Residues N232, N337, N391, N404, and N493 are each glycosylated (N-linked (GlcNAc...) asparagine). Fibronectin type-III domains follow at residues 325 to 435 (PPSA…TNQA) and 436 to 532 (APSP…SPDS). The helical transmembrane segment at 542-565 (VVMIAISAAVAIIVLTVVTYVLVG) threads the bilayer. Over 566–984 (RFCGYHKSKH…TQSKNGPVPV (419 aa)) the chain is Cytoplasmic. Phosphotyrosine; by autocatalysis occurs at positions 597 and 603. The Protein kinase domain maps to 622–883 (IAIDKVVGAG…QIVSILDKLI (262 aa)). ATP contacts are provided by residues 629–634 (GAGEFG), K654, and 701–707 (EYMENGS). Y702 carries the phosphotyrosine; by autocatalysis modification. The Proton acceptor role is filled by D747. Residue 751–752 (RN) coordinates ATP. At Y780 the chain carries Phosphotyrosine; by autocatalysis. The 65-residue stretch at 912–976 (ATFHTTGDWL…ISSIKALETQ (65 aa)) folds into the SAM domain. Phosphotyrosine is present on Y938. A PDZ-binding motif is present at residues 982–984 (VPV).

The protein belongs to the protein kinase superfamily. Tyr protein kinase family. Ephrin receptor subfamily. Heterotetramer upon binding of the ligand. The heterotetramer is composed of an ephrin dimer and a receptor dimer. Oligomerization is probably required to induce biological responses. Forms a ternary EFNA5-EPHA3-ADAM10 complex mediating EFNA5 extracellular domain shedding by ADAM10 which regulates the EFNA5-EPHA3 complex internalization and function. Interacts (phosphorylated) with PTPN1; dephosphorylates EPHA3 and may regulate its trafficking and function. Interacts (phosphorylated) with CRK; mediates EFNA5-EPHA3 signaling through RHOA GTPase activation. Interacts with NCK1 (via SH2 domain); mediates EFNA5-EPHA3 signaling. Autophosphorylates upon activation by EFNA5. Phosphorylation on Tyr-603 mediates interaction with NCK1. Dephosphorylated by PTPN1. Most abundant in the heart, brain and lung.

Its subcellular location is the cell membrane. It catalyses the reaction L-tyrosyl-[protein] + ATP = O-phospho-L-tyrosyl-[protein] + ADP + H(+). Receptor tyrosine kinase which binds promiscuously membrane-bound ephrin family ligands residing on adjacent cells, leading to contact-dependent bidirectional signaling into neighboring cells. The signaling pathway downstream of the receptor is referred to as forward signaling while the signaling pathway downstream of the ephrin ligand is referred to as reverse signaling. Highly promiscuous for ephrin-A ligands it binds preferentially EFNA5. Upon activation by EFNA5 regulates cell-cell adhesion, cytoskeletal organization and cell migration. Plays a role in cardiac cells migration and differentiation and regulates the formation of the atrioventricular canal and septum during development probably through activation by EFNA1. Involved in the retinotectal mapping of neurons. May also control the segregation but not the guidance of motor and sensory axons during neuromuscular circuit development. The protein is Ephrin type-A receptor 3 (Epha3) of Rattus norvegicus (Rat).